The sequence spans 479 residues: MSVSMQHHSSEASPATQPASVIHKNMVPWSERFSYSLSDFACNLSFSLVSTYLMFFYTDVFGISAAIVGTLFLVARIVDAFDGPFWGIMIDHTHTRWGKSRPYWLWFAIPFAVFSVLCFTVPNMSTGMKVVWAYVTYIGVDVLYSAVNIPITSILPSLTSNPQERVTLSTIRQFMGTLGATIISTIALPLVAYFGGGSTSSAHGWFMVALIMAVIAMVIFFIVFANTKERVQTVQSKKSIPIKTSLKALKRNWPWVIVIFINFIYWLGMQTRSQVTVYFFKYNMHDATLASFILGLQLVALLAVVITPWTAKRIGKRNTMLMGMLLAIVGQLILWGGSKALNVPTITVGTIVGYLGTGFVSGLIAVMLADSVDYGEWKNGVRAEGIVTSFSSFSAKFGMGIGGAVTGLILSAGGYVANHAQSAQALNAIEMNYVWVPIVGFGLSAIALLFYKVDKIEPKMLADLEQKHAQENALADDQK.

11 consecutive transmembrane segments (helical) span residues 54–74, 102–122, 131–151, 174–194, 205–225, 253–273, 289–309, 321–341, 348–368, 397–417, and 431–451; these read MFFYTDVFGISAAIVGTLFLV, PYWLWFAIPFAVFSVLCFTVP, VWAYVTYIGVDVLYSAVNIPI, FMGTLGATIISTIALPLVAYF, WFMVALIMAVIAMVIFFIVFA, WPWVIVIFINFIYWLGMQTRS, LASFILGLQLVALLAVVITPW, LMGMLLAIVGQLILWGGSKAL, VGTIVGYLGTGFVSGLIAVML, FGMGIGGAVTGLILSAGGYVA, and MNYVWVPIVGFGLSAIALLFY.

Belongs to the sodium:galactoside symporter (TC 2.A.2) family.

It is found in the cell membrane. Involved in the metabolism of isoprimeverose. Transports isoprimeverose into the cell. Transport is driven by the proton motive force generated by malolactic fermentation. Cannot transport D-xylose. The chain is Isoprimeverose transporter from Lactiplantibacillus pentosus (Lactobacillus pentosus).